Here is an 832-residue protein sequence, read N- to C-terminus: Mucosa-associated lymphoid tissue lymphoma translocation protein 1 homolog (832 aa).

The segment at 1 to 39 (MSLWGQPLQASPPLAVRQPPTASSGPSTSPPAGATLNRL) is disordered. Ser-2 is subject to N-acetylserine. Positions 19–39 (PPTASSGPSTSPPAGATLNRL) are enriched in low complexity. Residues 45–132 (RRLSESLDRA…EVLPLLNPPG (88 aa)) enclose the Death domain. Ig-like C2-type domains are found at residues 131 to 207 (PGLK…FEFS) and 218 to 314 (AEVT…KKAE). At Ser-141 the chain carries Phosphoserine. Intrachain disulfides connect Cys-154-Cys-196 and Cys-257-Cys-299. The caspase-like stretch occupies residues 356 to 570 (IGNMSYWEHP…SLSEKRALTD (215 aa)). The short motif at 377 to 384 (LTNLLRQL) is the Nuclear export signal element. Active-site residues include His-423 and Cys-472.

This sequence belongs to the peptidase C14B family. As to quaternary structure, homooligomer; forms oligomers which bind to TRAF6. Forms a complex with CARD14 and MALT1; resulting in the formation of a CBM (CARD14-BCL10-MALT1) complex. Forms a complex with CARD11 and MALT1; resulting in the formation of a CBM (CARD11-BCL10-MALT1) complex. Forms a complex with CARD9 and MALT1; resulting in the formation of a CBM (CARD9-BCL10-MALT1) complex.

The protein localises to the cytoplasm. It localises to the perinuclear region. Its subcellular location is the nucleus. Protease that enhances BCL10-induced activation: acts via formation of CBM complexes that channel adaptive and innate immune signaling downstream of CARD domain-containing proteins (CARD9, CARD11 and CARD14) to activate NF-kappa-B and MAP kinase p38 pathways which stimulate expression of genes encoding pro-inflammatory cytokines and chemokines. Mediates BCL10 cleavage: MALT1-dependent BCL10 cleavage plays an important role in T-cell antigen receptor-induced integrin adhesion. Involved in the induction of T helper 17 cells (Th17) differentiation. Cleaves RC3H1 and ZC3H12A in response to T-cell receptor (TCR) stimulation which releases their cooperatively repressed targets to promote Th17 cell differentiation. Also mediates cleavage of N4BP1 in T-cells following TCR-mediated activation, leading to N4BP1 inactivation. May also have ubiquitin ligase activity: binds to TRAF6, inducing TRAF6 oligomerization and activation of its ligase activity. This Mus musculus (Mouse) protein is Mucosa-associated lymphoid tissue lymphoma translocation protein 1 homolog.